Reading from the N-terminus, the 420-residue chain is POU domain, class 4, transcription factor 1 (420 aa).

Positions 57–66 (RAEALAAVDI) match the POU-IV box motif. Disordered stretches follow at residues 94 to 117 (STVP…GDLL) and 132 to 200 (GGAG…XGHL). Residues 99–108 (AHHHHHHHHH) are compositionally biased toward basic residues. Composition is skewed to gly residues over residues 132 to 165 (GGAG…GPGV) and 172 to 184 (PGGG…GGLL). A POU-specific domain is found at 261–338 (DSDTDPRELE…ILQAWLEEAE (78 aa)). Residues 356–415 (KKRKRTSIAAPEKRSLEAYFAVQPRPSSEKIAAIAEKLDLKKNVVRVWFCNQRQKQKRMK) constitute a DNA-binding region (homeobox).

This sequence belongs to the POU transcription factor family. Class-4 subfamily. In terms of assembly, interacts (via N-terminus) with RIT2; the interaction controls POU4F1 transactivation activity on some neuronal target genes. Isoform 1 interacts with POU4F2; this interaction inhibits both POU4F1 DNA-binding and transcriptional activities. Isoform 1 interacts (C-terminus) with ESR1 (via DNA-binding domain); this interaction decreases the estrogen receptor ESR1 transcriptional activity in a DNA- and ligand 17-beta-estradiol-independent manner. In terms of tissue distribution, detected in brain, spinal cord and dorsal root ganglion. Isoform 2 is detected in brain, spinal cord, dorsal root ganglion and spleen.

Its subcellular location is the nucleus. The protein resides in the cytoplasm. Its function is as follows. Multifunctional transcription factor with different regions mediating its different effects. Acts by binding (via its C-terminal domain) to sequences related to the consensus octamer motif 5'-ATGCAAAT-3' in the regulatory regions of its target genes. Regulates the expression of specific genes involved in differentiation and survival within a subset of neuronal lineages. It has been shown that activation of some of these genes requires its N-terminal domain, maybe through a neuronal-specific cofactor. Activates BCL2 expression and protects neuronal cells from apoptosis (via the N-terminal domain). Induces neuronal process outgrowth and the coordinate expression of genes encoding synaptic proteins. Exerts its major developmental effects in somatosensory neurons and in brainstem nuclei involved in motor control. Stimulates the binding affinity of the nuclear estrogene receptor ESR1 to DNA estrogen response element (ERE), and hence modulates ESR1-induced transcriptional activity. May positively regulate POU4F2 and POU4F3. Regulates dorsal root ganglion sensory neuron specification and axonal projection into the spinal cord. Plays a role in TNFSF11-mediated terminal osteoclast differentiation. Negatively regulates its own expression interacting directly with a highly conserved autoregulatory domain surrounding the transcription initiation site. Able to act as transcription factor, cannot regulate the expression of the same subset of genes than isoform 1. Does not have anitapoptotic effect on neuronal cells. This chain is POU domain, class 4, transcription factor 1 (Pou4f1), found in Rattus norvegicus (Rat).